Reading from the N-terminus, the 359-residue chain is Phospho-N-acetylmuramoyl-pentapeptide-transferase (359 aa).

Transmembrane regions (helical) follow at residues 7–27 (RSLT…VNSY), 28–48 (IFNS…SLVI), 82–102 (MGGI…NNYV), 103–123 (DSVG…IGFL), 147–167 (ALIA…NPLI), 179–199 (IVIF…VNLT), 203–223 (DGLA…EIFI), 229–249 (LIIY…FLKY), 256–276 (IFMG…ISIL), and 337–357 (IVEN…VLKI).

It belongs to the glycosyltransferase 4 family. MraY subfamily. Mg(2+) serves as cofactor.

It is found in the cell inner membrane. The catalysed reaction is UDP-N-acetyl-alpha-D-muramoyl-L-alanyl-gamma-D-glutamyl-meso-2,6-diaminopimeloyl-D-alanyl-D-alanine + di-trans,octa-cis-undecaprenyl phosphate = di-trans,octa-cis-undecaprenyl diphospho-N-acetyl-alpha-D-muramoyl-L-alanyl-D-glutamyl-meso-2,6-diaminopimeloyl-D-alanyl-D-alanine + UMP. It functions in the pathway cell wall biogenesis; peptidoglycan biosynthesis. Its function is as follows. Catalyzes the initial step of the lipid cycle reactions in the biosynthesis of the cell wall peptidoglycan: transfers peptidoglycan precursor phospho-MurNAc-pentapeptide from UDP-MurNAc-pentapeptide onto the lipid carrier undecaprenyl phosphate, yielding undecaprenyl-pyrophosphoryl-MurNAc-pentapeptide, known as lipid I. This Prochlorococcus marinus subsp. pastoris (strain CCMP1986 / NIES-2087 / MED4) protein is Phospho-N-acetylmuramoyl-pentapeptide-transferase.